A 1447-amino-acid chain; its full sequence is Calcium-dependent secretion activator (1447 aa).

The span at 1–15 (MIDPSSSEEEGEDDA) shows a compositional bias: acidic residues. 2 disordered regions span residues 1–35 (MIDP…TSAV) and 101–163 (DTGN…EEEE). Composition is skewed to polar residues over residues 18 to 32 (NVSS…TKGT) and 111 to 126 (GIPS…QSVG). Positions 127-144 (SSRANSLPRPLSPSPSLT) are enriched in low complexity. Residues 145–163 (SEKHETAEPHGKHEREEEE) show a composition bias toward basic and acidic residues. Residues 417–547 (SKYGLQKLKR…PLSSKSPEWH (131 aa)) form the C2 domain. The region spanning 573-683 (NMKHCGYLYA…WVMAMYRATG (111 aa)) is the PH domain. The 188-residue stretch at 970–1157 (VDMDRVLSEQ…DMIEQCIQRT (188 aa)) folds into the MHD1 domain. The span at 1386–1395 (REGEEEDNGD) shows a compositional bias: acidic residues. The disordered stretch occupies residues 1386–1406 (REGEEEDNGDESTSNIPRGLP).

As to expression, restricted to the nervous system at all stages of development and highly localized at synapses (at protein level).

It is found in the cytoplasmic vesicle membrane. The protein resides in the synapse. Calcium-binding protein involved in exocytosis of vesicles filled with neurotransmitters and neuropeptides. May specifically mediate the Ca(2+)-dependent exocytosis of large dense-core vesicles (DCVs) and other dense-core vesicles. However, it probably also participates in small clear synaptic vesicles (SVs) exocytosis and it is unclear whether its function is related to Ca(2+) triggering. The polypeptide is Calcium-dependent secretion activator (Drosophila melanogaster (Fruit fly)).